Consider the following 361-residue polypeptide: Nicotinate-nucleotide--dimethylbenzimidazole phosphoribosyltransferase (361 aa).

Glu315 serves as the catalytic Proton acceptor.

This sequence belongs to the CobT family.

The catalysed reaction is 5,6-dimethylbenzimidazole + nicotinate beta-D-ribonucleotide = alpha-ribazole 5'-phosphate + nicotinate + H(+). It functions in the pathway nucleoside biosynthesis; alpha-ribazole biosynthesis; alpha-ribazole from 5,6-dimethylbenzimidazole: step 1/2. Functionally, catalyzes the synthesis of alpha-ribazole-5'-phosphate from nicotinate mononucleotide (NAMN) and 5,6-dimethylbenzimidazole (DMB). The chain is Nicotinate-nucleotide--dimethylbenzimidazole phosphoribosyltransferase from Clostridium perfringens (strain ATCC 13124 / DSM 756 / JCM 1290 / NCIMB 6125 / NCTC 8237 / Type A).